The following is a 415-amino-acid chain: Ribulose bisphosphate carboxylase/oxygenase activase (415 aa).

An ATP-binding site is contributed by 37-44 (GRKGEGKT).

The protein belongs to the RuBisCO activase family.

Its function is as follows. Activation of RuBisCO (ribulose-1,5-bisohosphate carboxylase/oxygenase; EC 4.1.1.39) involves the ATP-dependent carboxylation of the epsilon-amino group of lysine leading to a carbamate structure. The polypeptide is Ribulose bisphosphate carboxylase/oxygenase activase (rca) (Anabaena sp. (strain CA / ATCC 33047)).